The primary structure comprises 207 residues: Large ribosomal subunit protein bL17m (207 aa).

Positions 173 to 200 (EKESEHARLKEDHEDEKTVKKDWKRGDP) are enriched in basic and acidic residues. Residues 173 to 207 (EKESEHARLKEDHEDEKTVKKDWKRGDPIPRPTYI) form a disordered region.

The protein belongs to the bacterial ribosomal protein bL17 family. In terms of assembly, component of the mitochondrial large ribosomal subunit (mt-LSU). Mature yeast 74S mitochondrial ribosomes consist of a small (37S) and a large (54S) subunit. The 37S small subunit contains a 15S ribosomal RNA (15S mt-rRNA) and at least 32 different proteins. The 54S large subunit contains a 21S rRNA (21S mt-rRNA) and at least 45 different proteins.

It localises to the mitochondrion. Component of the mitochondrial ribosome (mitoribosome), a dedicated translation machinery responsible for the synthesis of mitochondrial genome-encoded proteins, including at least some of the essential transmembrane subunits of the mitochondrial respiratory chain. The mitoribosomes are attached to the mitochondrial inner membrane and translation products are cotranslationally integrated into the membrane. This is Large ribosomal subunit protein bL17m (mrpl8) from Schizosaccharomyces pombe (strain 972 / ATCC 24843) (Fission yeast).